Consider the following 175-residue polypeptide: 6,7-dimethyl-8-ribityllumazine synthase (175 aa).

5-amino-6-(D-ribitylamino)uracil is bound by residues F24, 58 to 60 (ALE), and 82 to 84 (AVI). Residue 87-88 (ET) participates in (2S)-2-hydroxy-3-oxobutyl phosphate binding. The Proton donor role is filled by H90. 5-amino-6-(D-ribitylamino)uracil is bound at residue N115. R129 lines the (2S)-2-hydroxy-3-oxobutyl phosphate pocket. The interval 150–175 (ALEPEEDDEDEDDEDEDFDDEEDDGR) is disordered. Over residues 152-175 (EPEEDDEDEDDEDEDFDDEEDDGR) the composition is skewed to acidic residues.

This sequence belongs to the DMRL synthase family.

It catalyses the reaction (2S)-2-hydroxy-3-oxobutyl phosphate + 5-amino-6-(D-ribitylamino)uracil = 6,7-dimethyl-8-(1-D-ribityl)lumazine + phosphate + 2 H2O + H(+). Its pathway is cofactor biosynthesis; riboflavin biosynthesis; riboflavin from 2-hydroxy-3-oxobutyl phosphate and 5-amino-6-(D-ribitylamino)uracil: step 1/2. Functionally, catalyzes the formation of 6,7-dimethyl-8-ribityllumazine by condensation of 5-amino-6-(D-ribitylamino)uracil with 3,4-dihydroxy-2-butanone 4-phosphate. This is the penultimate step in the biosynthesis of riboflavin. This Bordetella bronchiseptica (strain ATCC BAA-588 / NCTC 13252 / RB50) (Alcaligenes bronchisepticus) protein is 6,7-dimethyl-8-ribityllumazine synthase.